We begin with the raw amino-acid sequence, 265 residues long: MHAIILTMRVGIVGFGNMGQAFALCFSKKLGKENIIVTDKVQEKRNLATEMGIAFASDVKFLADNSDVVLVAVKPKDSQEVLQKLKDYKGIILSIMAGVSIEKMEKILGKDKKIVRVMPNVNVAVGSGVMAITDNGNLSEEERSKVEELLLSCGTLYRIEERLFDAFTALAGSGPAFVFSFIDALALAGVHQGFSYEQALRIALDTVMGSAKLLKEFQVNPNELIAKVTSPGGTTIEGIKYLEEKGFKGTVMECINRTSQKAKKL.

This sequence belongs to the pyrroline-5-carboxylate reductase family.

It is found in the cytoplasm. The enzyme catalyses L-proline + NADP(+) = (S)-1-pyrroline-5-carboxylate + NADPH + 2 H(+). It carries out the reaction L-proline + NAD(+) = (S)-1-pyrroline-5-carboxylate + NADH + 2 H(+). The protein operates within amino-acid biosynthesis; L-proline biosynthesis; L-proline from L-glutamate 5-semialdehyde: step 1/1. Catalyzes the reduction of 1-pyrroline-5-carboxylate (PCA) to L-proline. This is Pyrroline-5-carboxylate reductase from Aquifex aeolicus (strain VF5).